The sequence spans 74 residues: RNA-binding protein Hfq (74 aa).

The region spanning 9-69 is the Sm domain; the sequence is DQFLNQLRKD…ISTFAPEKNV (61 aa).

This sequence belongs to the Hfq family. Homohexamer.

RNA chaperone that binds small regulatory RNA (sRNAs) and mRNAs to facilitate mRNA translational regulation in response to envelope stress, environmental stress and changes in metabolite concentrations. Also binds with high specificity to tRNAs. The chain is RNA-binding protein Hfq from Geobacillus sp. (strain WCH70).